The following is a 138-amino-acid chain: Translation initiation factor 5A (138 aa).

K42 carries the hypusine modification.

Belongs to the eIF-5A family.

Its subcellular location is the cytoplasm. Functions by promoting the formation of the first peptide bond. This is Translation initiation factor 5A (eif5a) from Pyrobaculum aerophilum (strain ATCC 51768 / DSM 7523 / JCM 9630 / CIP 104966 / NBRC 100827 / IM2).